We begin with the raw amino-acid sequence, 1128 residues long: Cordon-bleu protein-like 1 (1128 aa).

Residues 1–35 (MDGRTPRPQDAPARRKPKAKAPLPPAETKYTDVSS) form a disordered region. Phosphothreonine is present on Thr139. 3 positions are modified to phosphoserine: Ser204, Ser222, and Ser256. 3 disordered regions span residues 249–309 (KKRD…VPQD), 325–441 (MSVD…SPKS), and 454–499 (TLKN…TSNG). Thr260 is subject to Phosphothreonine. A compositionally biased stretch (polar residues) spans 270-286 (FTRSNTISKPYISNTLP). Ser273 bears the Phosphoserine mark. At Thr284 the chain carries Phosphothreonine. The KKRRAP 1 signature appears at 291–296 (KKRRAP). Phosphoserine is present on residues Ser326, Ser333, Ser344, and Ser356. Residues 345–357 (LQLSSMSAGNSSL) are compositionally biased toward polar residues. A KKRRAP 2 motif is present at residues 360–365 (TKRKAP). Residues 397-415 (SEANSPEELSSPAGISSDY) show a composition bias toward polar residues. The span at 416–425 (SLEEIDEKEE) shows a compositional bias: acidic residues. Phosphoserine is present on residues Ser438, Ser441, Ser461, Ser471, and Ser474. The span at 475 to 488 (MEEKQETKSTDGQE) shows a compositional bias: basic and acidic residues. Phosphoserine is present on residues Ser563, Ser584, Ser786, Ser813, Ser814, and Ser821. Disordered regions lie at residues 780 to 840 (TEDS…PFAP), 882 to 964 (SAAA…SQVS), 995 to 1081 (RSQS…PEQM), and 1103 to 1128 (IPSN…QDGH). Residues 899 to 908 (LTNKEAERDM) are compositionally biased toward basic and acidic residues. 5 positions are modified to phosphoserine: Ser911, Ser917, Ser947, Ser1069, and Ser1070. Polar residues-rich tracts occupy residues 1045-1081 (SAHN…PEQM) and 1103-1122 (IPSN…SMSP). Residues 1081 to 1101 (MRQSLLTAIRSGEAAAKLKRV) form the WH2 domain. Ser1121 bears the Phosphoserine mark.

This Homo sapiens (Human) protein is Cordon-bleu protein-like 1.